The chain runs to 622 residues: Kelch-like protein 14 (622 aa).

The BTB domain occupies 33 to 145 (CDVTLTAQGQ…LYTANVTLSL (113 aa)). Residues 73 to 108 (ALGPGAQDGLGGAPPKEPPPPPQEEPGTPSSSPEDK) form a disordered region. Positions 87 to 96 (PKEPPPPPQE) are enriched in pro residues. Kelch repeat units lie at residues 317–366 (MLLL…EVEN), 367–418 (FLFV…RLDK), 419–465 (NLYV…VHNG), 467–512 (IYIS…VMND), 514–564 (LYAI…VLDD), and 566–614 (IYLV…TVIL).

It is found in the cytoplasm. The protein localises to the cytosol. It localises to the endoplasmic reticulum membrane. This Gallus gallus (Chicken) protein is Kelch-like protein 14 (KLHL14).